A 178-amino-acid chain; its full sequence is Large ribosomal subunit protein uL6 (178 aa).

Belongs to the universal ribosomal protein uL6 family. In terms of assembly, part of the 50S ribosomal subunit.

This protein binds to the 23S rRNA, and is important in its secondary structure. It is located near the subunit interface in the base of the L7/L12 stalk, and near the tRNA binding site of the peptidyltransferase center. The sequence is that of Large ribosomal subunit protein uL6 from Bacillus licheniformis (strain ATCC 14580 / DSM 13 / JCM 2505 / CCUG 7422 / NBRC 12200 / NCIMB 9375 / NCTC 10341 / NRRL NRS-1264 / Gibson 46).